The chain runs to 303 residues: UDP-3-O-acyl-N-acetylglucosamine deacetylase (303 aa).

3 residues coordinate Zn(2+): histidine 78, histidine 237, and aspartate 241. Histidine 264 serves as the catalytic Proton donor.

This sequence belongs to the LpxC family. The cofactor is Zn(2+).

It carries out the reaction a UDP-3-O-[(3R)-3-hydroxyacyl]-N-acetyl-alpha-D-glucosamine + H2O = a UDP-3-O-[(3R)-3-hydroxyacyl]-alpha-D-glucosamine + acetate. It functions in the pathway glycolipid biosynthesis; lipid IV(A) biosynthesis; lipid IV(A) from (3R)-3-hydroxytetradecanoyl-[acyl-carrier-protein] and UDP-N-acetyl-alpha-D-glucosamine: step 2/6. Catalyzes the hydrolysis of UDP-3-O-myristoyl-N-acetylglucosamine to form UDP-3-O-myristoylglucosamine and acetate, the committed step in lipid A biosynthesis. In Pseudomonas paraeruginosa (strain DSM 24068 / PA7) (Pseudomonas aeruginosa (strain PA7)), this protein is UDP-3-O-acyl-N-acetylglucosamine deacetylase.